We begin with the raw amino-acid sequence, 181 residues long: Transcriptional repressor NrdR (181 aa).

The segment at 3-34 (CLFCQHTDTRVIDSRVSEDGATIRRRRECEAC) is a zinc-finger region. One can recognise an ATP-cone domain in the interval 49–139 (PVIIKKDGGR…VYRSFQDVAD (91 aa)).

Belongs to the NrdR family. It depends on Zn(2+) as a cofactor.

Functionally, negatively regulates transcription of bacterial ribonucleotide reductase nrd genes and operons by binding to NrdR-boxes. The polypeptide is Transcriptional repressor NrdR (Xylella fastidiosa (strain M12)).